We begin with the raw amino-acid sequence, 588 residues long: MRTHFCGLVDETLIGQTVTLAGWTDVARNLGGVCFIDLRDHEGIVQVTVEPVAGDDASAELFKVAASLGYEDVLQVEGVVRARHAVNDKLRSGKVEVIATRISILNKAAPLPFHAHENPGEETRLKYRYLDLRRPEMQRMQRTRIKLVQALRRHLDARDFQDIETPILTKATPEGARDFLVPARMHPGEFYALPQSPQLFKQILMVAGFDRYYQIARCFRDEALRADRQLEFTQLDMEFAFVRERDVQDFVEDMIRAIFKEVVDVDLAAQFPRMTWAEAMRRYGSDKPDLRIALELVDVAELVKASQFPVFTAAADDADGRVAALLIPGGASLSRKQIDEYAAHAAKYGAKGLAYIKLSETGEVSSPIAKFFSEESFAALLKHVGASNGDIVFFGAGGYTKVSDFMGALRLKAGKDFNLVADGWAPLWVTDFPMFEWDDEAQRYVALHHPFTAPAVDDIADLRANARTAVSRGYDMVLNGNEIGGGSIRIHRPDMQSAVFELLGIGAEEARAKFGFLLDALNYGAPPHGGIAFGIDRIAALMAGTESIRDVIPFPKTTGAQDLMTDAPSPIAADQLAEVHVQVRPKQV.

Glu174 contributes to the L-aspartate binding site. Positions 198 to 201 are aspartate; sequence QLFK. Arg220 provides a ligand contact to L-aspartate. Residues 220–222 and Gln229 contribute to the ATP site; that span reads RDE. His448 is a binding site for L-aspartate. Glu482 is an ATP binding site. Residue Arg489 coordinates L-aspartate. Residue 534 to 537 coordinates ATP; the sequence is GIDR.

The protein belongs to the class-II aminoacyl-tRNA synthetase family. Type 1 subfamily. In terms of assembly, homodimer.

Its subcellular location is the cytoplasm. It catalyses the reaction tRNA(Asp) + L-aspartate + ATP = L-aspartyl-tRNA(Asp) + AMP + diphosphate. Functionally, catalyzes the attachment of L-aspartate to tRNA(Asp) in a two-step reaction: L-aspartate is first activated by ATP to form Asp-AMP and then transferred to the acceptor end of tRNA(Asp). The protein is Aspartate--tRNA ligase of Xanthomonas euvesicatoria pv. vesicatoria (strain 85-10) (Xanthomonas campestris pv. vesicatoria).